Here is a 139-residue protein sequence, read N- to C-terminus: Putative general secretion pathway protein B (139 aa).

A helical transmembrane segment spans residues 28 to 48; the sequence is IIYVICLLLICLWFAGMVLVG. Residues 93 to 139 are disordered; that stretch reads VEEEDDPGVAVENAPSSSEDEENTVEESEEKAGLRERVKNALNELER. The span at 110-121 shows a compositional bias: acidic residues; the sequence is SEDEENTVEESE. The segment covering 122–139 has biased composition (basic and acidic residues); that stretch reads EKAGLRERVKNALNELER.

The protein localises to the cell membrane. In terms of biological role, part of a cryptic operon that encodes proteins involved in type II secretion pathway in other organisms, but is not expressed in strain K12 under standard laboratory conditions. May play a regulatory role under conditions of derepressed gsp gene expression. The polypeptide is Putative general secretion pathway protein B (Escherichia coli (strain K12)).